A 527-amino-acid chain; its full sequence is Inorganic phosphate transporter 1-1 (527 aa).

The Cytoplasmic portion of the chain corresponds to 1 to 21 (MAGGQLNVLSTLDQAKTQWYH). A helical membrane pass occupies residues 22-42 (FMAIVIAGMGFFTDAYDLFCI). Over 43 to 70 (SLVTKLLGRIYYTDDSKDTPGALPPNVS) the chain is Extracellular. A helical transmembrane segment spans residues 71–91 (AAVTGVALCGTLAGQLFFGWL). Residues 92–99 (GDKLGRKS) are Cytoplasmic-facing. A helical transmembrane segment spans residues 100 to 120 (VYGFTLILMVVCSVASGLSFG). Topologically, residues 121-124 (SSAK) are extracellular. A helical transmembrane segment spans residues 125–145 (GVVSTLCFFRFWLGFGIGGDY). At 146 to 163 (PLSATIMSEYANKRTRGA) the chain is on the cytoplasmic side. Residues 164–184 (FIAAVFAMQGFGILFGAIVAL) traverse the membrane as a helical segment. The Extracellular portion of the chain corresponds to 185 to 211 (AVSAGFRHAYPAPSYSDNHAASLVPQA). The chain crosses the membrane as a helical span at residues 212–232 (DYVWRIILMFGTVPAALTYYW). Topologically, residues 233–292 (RMKMPETARYTALIARNAKQAAADMSKVLHTQIEESADRAETVAVGGESWGLFSRQFLRR) are cytoplasmic. The chain crosses the membrane as a helical span at residues 293 to 313 (HGLHLLATTSTWFLLDIAFYS). At 314 to 348 (QNLFQKDIFSKVGWIPPAKTMNALEELYRIARAQA) the chain is on the extracellular side. Residues 349–369 (LIALCGTIPGYWFTVAFIEIM) traverse the membrane as a helical segment. Residues 370 to 371 (GR) are Cytoplasmic-facing. A helical membrane pass occupies residues 372-392 (FWIQIMGFAMMTAFMLGLAIP). Over 393 to 405 (YHHWTTPGHHTGF) the chain is Extracellular. A helical transmembrane segment spans residues 406 to 426 (IVMYGFTFFFANFGPNSTTFI). Residues 427–442 (VPAEIYPARLRSTCHG) lie on the Cytoplasmic side of the membrane. Residues 443-463 (ISAAAGKAGAIIGAFGFLYAA) traverse the membrane as a helical segment. The Extracellular portion of the chain corresponds to 464 to 481 (QDQHKPEPGYPRGIGIKN). Residues 482 to 502 (ALFVLAGTNFLGTIMTLLVPE) form a helical membrane-spanning segment. Residues 503 to 527 (SKGMSLEVISQEVADGDDEEAAYPK) are Cytoplasmic-facing.

The protein belongs to the major facilitator superfamily. Phosphate:H(+) symporter (TC 2.A.1.9) family. As to expression, expressed in roots, stems and leaves.

It localises to the membrane. High-affinity transporter for external inorganic phosphate. Required for phosphate acquisition in plant. In Oryza sativa subsp. japonica (Rice), this protein is Inorganic phosphate transporter 1-1 (PHT1-1).